The primary structure comprises 129 residues: MAKSLRSKWKRKMRAEKRKKNAPKEASRLKSILKLDGDVLMKDVQEIATVVVPKPKHCQEKMQCEVKDEKDDMKMETDIKRNKKTLLDQHGQYPIWMNQRQRKRLKAKREKRKGKSKAKAVKVAKGLAW.

The span at 1–21 shows a compositional bias: basic residues; that stretch reads MAKSLRSKWKRKMRAEKRKKN. The interval 1 to 27 is disordered; the sequence is MAKSLRSKWKRKMRAEKRKKNAPKEAS. Glycyl lysine isopeptide (Lys-Gly) (interchain with G-Cter in SUMO2) cross-links involve residues lysine 67 and lysine 74. Positions 100–122 are enriched in basic residues; the sequence is RQRKRLKAKREKRKGKSKAKAVK. The segment at 100-129 is disordered; sequence RQRKRLKAKREKRKGKSKAKAVKVAKGLAW.

It belongs to the learning-associated protein family. In terms of assembly, interacts with CTCF, MYO1C and with the transcriptional machinery, including RNA polymerase II and TBP.

The protein resides in the nucleus. Its subcellular location is the nucleolus. It is found in the chromosome. In terms of biological role, in hippocampal neurons, regulates dendritic and spine growth and synaptic transmission. This is Protein LLP homolog (LLPH) from Homo sapiens (Human).